The chain runs to 330 residues: Replication factor C small subunit (330 aa).

48–55 (GPPGTGKT) is an ATP binding site.

The protein belongs to the activator 1 small subunits family. RfcS subfamily. Heteropentamer composed of four small subunits (RfcS) and one large subunit (RfcL). A homotetramer of this subunit interacts with PCNA heterodimer PCNA1-PCNA2.

Its function is as follows. Part of the RFC clamp loader complex which loads the PCNA sliding clamp onto DNA. The complex possesses DNA-dependent ATPase activity. The chain is Replication factor C small subunit (rfcS) from Saccharolobus solfataricus (strain ATCC 35092 / DSM 1617 / JCM 11322 / P2) (Sulfolobus solfataricus).